The chain runs to 441 residues: COBRA-like protein 2 (441 aa).

Positions M1–A28 are cleaved as a signal peptide. N-linked (GlcNAc...) asparagine glycans are attached at residues N37, N162, N170, N209, N234, N249, N314, N329, and N348. N417 is lipidated: GPI-anchor amidated asparagine. A propeptide spans A418–M441 (removed in mature form).

It belongs to the COBRA family. In terms of tissue distribution, expressed in roots, stems, leaves, flowers and siliques.

It is found in the cell membrane. The sequence is that of COBRA-like protein 2 (COBL2) from Arabidopsis thaliana (Mouse-ear cress).